Here is a 78-residue protein sequence, read N- to C-terminus: Translation initiation factor IF-1, chloroplastic (78 aa).

The S1-like domain occupies 1 to 72 (MEKQNLIDME…TKGRITYRLR (72 aa)).

The protein belongs to the IF-1 family. Component of the 30S ribosomal translation pre-initiation complex which assembles on the 30S ribosome in the order IF-2 and IF-3, IF-1 and N-formylmethionyl-tRNA(fMet); mRNA recruitment can occur at any time during PIC assembly.

The protein localises to the plastid. It is found in the chloroplast. One of the essential components for the initiation of protein synthesis. Stabilizes the binding of IF-2 and IF-3 on the 30S subunit to which N-formylmethionyl-tRNA(fMet) subsequently binds. Helps modulate mRNA selection, yielding the 30S pre-initiation complex (PIC). Upon addition of the 50S ribosomal subunit IF-1, IF-2 and IF-3 are released leaving the mature 70S translation initiation complex. The sequence is that of Translation initiation factor IF-1, chloroplastic from Anthoceros angustus (Hornwort).